An 843-amino-acid chain; its full sequence is Lon protease (843 aa).

Residues 1-16 show a composition bias toward basic and acidic residues; that stretch reads MRERKETAMSDKEKKG. Residues 1-22 are disordered; sequence MRERKETAMSDKEKKGAGAGAQ. The 195-residue stretch at 42–236 folds into the Lon N-terminal domain; it reads LPILPLRNSV…LVLELLNRKR (195 aa). 388–395 provides a ligand contact to ATP; sequence GPPGVGKT. A Lon proteolytic domain is found at 627 to 808; it reads TEIAGVATGL…DEVLQAALEE (182 aa). Catalysis depends on residues serine 714 and lysine 757. The segment at 805 to 843 is disordered; it reads ALEENPVGRKPPAAPEPEGEKKPGATPTPPAKKPDEIRV.

The protein belongs to the peptidase S16 family. As to quaternary structure, homohexamer. Organized in a ring with a central cavity.

The protein resides in the cytoplasm. It carries out the reaction Hydrolysis of proteins in presence of ATP.. ATP-dependent serine protease that mediates the selective degradation of mutant and abnormal proteins as well as certain short-lived regulatory proteins. Required for cellular homeostasis and for survival from DNA damage and developmental changes induced by stress. Degrades polypeptides processively to yield small peptide fragments that are 5 to 10 amino acids long. Binds to DNA in a double-stranded, site-specific manner. This is Lon protease from Anaeromyxobacter dehalogenans (strain 2CP-C).